The chain runs to 343 residues: ATP-dependent (S)-NAD(P)H-hydrate dehydratase (343 aa).

Residues 1 to 42 constitute a mitochondrion transit peptide; sequence MAVCPYGAAAVVMALLSAAIAFHCSPLLAVLQRALSLHTAHA. The YjeF C-terminal domain occupies 49–340; sequence LFQLVRNIVP…AEVGAAFSKL (292 aa). Lys63 is subject to N6-acetyllysine. A Phosphotyrosine modification is found at Tyr81. (6S)-NADPHX-binding positions include Gly149 and 202–208; that span reads NHVEFSR. ATP-binding positions include 242–246 and 261–270; these read KGEQD and GSSRRCGGQG. Residue Asp271 coordinates (6S)-NADPHX.

This sequence belongs to the NnrD/CARKD family. It depends on Mg(2+) as a cofactor.

The protein localises to the mitochondrion. It carries out the reaction (6S)-NADHX + ATP = ADP + phosphate + NADH + H(+). It catalyses the reaction (6S)-NADPHX + ATP = ADP + phosphate + NADPH + H(+). Catalyzes the dehydration of the S-form of NAD(P)HX at the expense of ATP, which is converted to ADP. Together with NAD(P)HX epimerase, which catalyzes the epimerization of the S- and R-forms, the enzyme allows the repair of both epimers of NAD(P)HX, a damaged form of NAD(P)H that is a result of enzymatic or heat-dependent hydration. This Rattus norvegicus (Rat) protein is ATP-dependent (S)-NAD(P)H-hydrate dehydratase.